Here is a 120-residue protein sequence, read N- to C-terminus: UPF0102 protein PST_1070 (120 aa).

Belongs to the UPF0102 family.

This chain is UPF0102 protein PST_1070, found in Stutzerimonas stutzeri (strain A1501) (Pseudomonas stutzeri).